A 93-amino-acid polypeptide reads, in one-letter code: Neutrophil cationic peptide 1 type B (93 aa).

An N-terminal signal peptide occupies residues 1–19 (MRTVPLFAACLLLTLMAQA). Positions 20 to 62 (EPLPRAADHSDTKMKGDREDHVAVISFWEEESTSLQDAGAGAG) are excised as a propeptide. Intrachain disulfides connect Cys-65–Cys-93, Cys-67–Cys-82, and Cys-72–Cys-92.

Belongs to the alpha-defensin family. As to expression, bone marrow.

The protein resides in the secreted. In terms of biological role, has antibiotic, anti-fungi and antiviral activity. This Cavia porcellus (Guinea pig) protein is Neutrophil cationic peptide 1 type B.